We begin with the raw amino-acid sequence, 49 residues long: DNA-directed RNA polymerase subunit Rpo12 (49 aa).

Positions 11, 27, and 30 each coordinate Zn(2+).

Belongs to the archaeal Rpo12/eukaryotic RPC10 RNA polymerase subunit family. In terms of assembly, part of the RNA polymerase complex. The cofactor is Zn(2+).

It is found in the cytoplasm. It localises to the chromosome. It carries out the reaction RNA(n) + a ribonucleoside 5'-triphosphate = RNA(n+1) + diphosphate. Its function is as follows. DNA-dependent RNA polymerase (RNAP) catalyzes the transcription of DNA into RNA using the four ribonucleoside triphosphates as substrates. The protein is DNA-directed RNA polymerase subunit Rpo12 of Thermococcus kodakarensis (strain ATCC BAA-918 / JCM 12380 / KOD1) (Pyrococcus kodakaraensis (strain KOD1)).